The following is a 297-amino-acid chain: Pantothenate synthetase (297 aa).

Methionine 30 to histidine 37 lines the ATP pocket. Histidine 37 serves as the catalytic Proton donor. A (R)-pantoate-binding site is contributed by glutamine 61. Position 61 (glutamine 61) interacts with beta-alanine. Glycine 147–aspartate 150 contributes to the ATP binding site. A (R)-pantoate-binding site is contributed by glutamine 153. Residues valine 176 and leucine 184–arginine 187 each bind ATP.

Belongs to the pantothenate synthetase family. In terms of assembly, homodimer.

The protein resides in the cytoplasm. It catalyses the reaction (R)-pantoate + beta-alanine + ATP = (R)-pantothenate + AMP + diphosphate + H(+). It functions in the pathway cofactor biosynthesis; (R)-pantothenate biosynthesis; (R)-pantothenate from (R)-pantoate and beta-alanine: step 1/1. Its function is as follows. Catalyzes the condensation of pantoate with beta-alanine in an ATP-dependent reaction via a pantoyl-adenylate intermediate. The polypeptide is Pantothenate synthetase (Rhizobium etli (strain ATCC 51251 / DSM 11541 / JCM 21823 / NBRC 15573 / CFN 42)).